The sequence spans 600 residues: Keratin, type II cuticular Hb4 (600 aa).

The segment at 1 to 165 (MSCRSYRVSS…PNAQRVKKDE (165 aa)) is head. Residues 165–476 (EKEQIKTLNN…RLLEGEESRL (312 aa)) enclose the IF rod domain. The interval 166–200 (KEQIKTLNNKFASFIDKVRFLEQQNKLLETKWSFL) is coil 1A. The segment at 201–210 (QEQKCIRSNL) is linker 1. The segment at 211-311 (EPLFESYITN…YMEEIQLLQS (101 aa)) is coil 1B. The linker 12 stretch occupies residues 312–328 (HISETSVIVKMDNSRDL). Residues 329-472 (NLDGIIAEVK…ATYRRLLEGE (144 aa)) form a coil 2 region. A tail region spans residues 473–600 (ESRLCEGVGP…STTTSCRTKY (128 aa)).

The protein belongs to the intermediate filament family. As to quaternary structure, heterotetramer of two type I and two type II keratins. Expressed in the hair follicles.

The chain is Keratin, type II cuticular Hb4 (KRT84) from Homo sapiens (Human).